The following is an 880-amino-acid chain: Alanine--tRNA ligase (880 aa).

Zn(2+) contacts are provided by H565, H569, C675, and H679.

It belongs to the class-II aminoacyl-tRNA synthetase family. It depends on Zn(2+) as a cofactor.

It localises to the cytoplasm. The catalysed reaction is tRNA(Ala) + L-alanine + ATP = L-alanyl-tRNA(Ala) + AMP + diphosphate. Its function is as follows. Catalyzes the attachment of alanine to tRNA(Ala) in a two-step reaction: alanine is first activated by ATP to form Ala-AMP and then transferred to the acceptor end of tRNA(Ala). Also edits incorrectly charged Ser-tRNA(Ala) and Gly-tRNA(Ala) via its editing domain. This is Alanine--tRNA ligase from Granulibacter bethesdensis (strain ATCC BAA-1260 / CGDNIH1).